A 260-amino-acid chain; its full sequence is Thymidylate synthase (260 aa).

A dUMP-binding site is contributed by Arg-21. His-51 is a (6R)-5,10-methylene-5,6,7,8-tetrahydrofolate binding site. 122–123 (RR) lines the dUMP pocket. Catalysis depends on Cys-142, which acts as the Nucleophile. Residues 162-165 (RSAD), Asn-173, and 203-205 (HLY) contribute to the dUMP site. Asp-165 contacts (6R)-5,10-methylene-5,6,7,8-tetrahydrofolate. Ala-259 contributes to the (6R)-5,10-methylene-5,6,7,8-tetrahydrofolate binding site.

The protein belongs to the thymidylate synthase family. Bacterial-type ThyA subfamily. Homodimer.

Its subcellular location is the cytoplasm. The catalysed reaction is dUMP + (6R)-5,10-methylene-5,6,7,8-tetrahydrofolate = 7,8-dihydrofolate + dTMP. Its pathway is pyrimidine metabolism; dTTP biosynthesis. In terms of biological role, catalyzes the reductive methylation of 2'-deoxyuridine-5'-monophosphate (dUMP) to 2'-deoxythymidine-5'-monophosphate (dTMP) while utilizing 5,10-methylenetetrahydrofolate (mTHF) as the methyl donor and reductant in the reaction, yielding dihydrofolate (DHF) as a by-product. This enzymatic reaction provides an intracellular de novo source of dTMP, an essential precursor for DNA biosynthesis. In Methylococcus capsulatus (strain ATCC 33009 / NCIMB 11132 / Bath), this protein is Thymidylate synthase.